Consider the following 201-residue polypeptide: dTDP-4-dehydrorhamnose 3,5-epimerase (201 aa).

Residues Arg-23, Glu-28, 47 to 49, and Arg-59 each bind substrate; that span reads QAN. The active-site Proton acceptor is His-62. Positions 72 and 119 each coordinate substrate. The active-site Proton donor is the Tyr-132. Substrate contacts are provided by Glu-143 and Arg-166.

This sequence belongs to the dTDP-4-dehydrorhamnose 3,5-epimerase family. As to quaternary structure, homodimer.

The catalysed reaction is dTDP-4-dehydro-6-deoxy-alpha-D-glucose = dTDP-4-dehydro-beta-L-rhamnose. It functions in the pathway carbohydrate biosynthesis; dTDP-L-rhamnose biosynthesis. Its function is as follows. Catalyzes the epimerization of the C3' and C5'positions of dTDP-6-deoxy-D-xylo-4-hexulose, forming dTDP-6-deoxy-L-lyxo-4-hexulose. Involved in the biosynthesis of the dTDP-L-rhamnose which is a component of the critical linker, D-N-acetylglucosamine-L-rhamnose disaccharide, which connects the galactan region of arabinogalactan to peptidoglycan via a phosphodiester linkage. The sequence is that of dTDP-4-dehydrorhamnose 3,5-epimerase (rmlC) from Mycolicibacterium smegmatis (strain ATCC 700084 / mc(2)155) (Mycobacterium smegmatis).